Consider the following 305-residue polypeptide: UDP-3-O-acyl-N-acetylglucosamine deacetylase (305 aa).

Zn(2+)-binding residues include His-79, His-238, and Asp-242. Catalysis depends on His-265, which acts as the Proton donor.

Belongs to the LpxC family. Zn(2+) serves as cofactor.

The catalysed reaction is a UDP-3-O-[(3R)-3-hydroxyacyl]-N-acetyl-alpha-D-glucosamine + H2O = a UDP-3-O-[(3R)-3-hydroxyacyl]-alpha-D-glucosamine + acetate. It participates in glycolipid biosynthesis; lipid IV(A) biosynthesis; lipid IV(A) from (3R)-3-hydroxytetradecanoyl-[acyl-carrier-protein] and UDP-N-acetyl-alpha-D-glucosamine: step 2/6. Catalyzes the hydrolysis of UDP-3-O-myristoyl-N-acetylglucosamine to form UDP-3-O-myristoylglucosamine and acetate, the committed step in lipid A biosynthesis. This chain is UDP-3-O-acyl-N-acetylglucosamine deacetylase, found in Haemophilus influenzae (strain PittGG).